The primary structure comprises 605 residues: DNA primase (605 aa).

The segment at 39 to 63 (CPFHHERTPSFHVVPDKKMYYCFGC) adopts a CHC2-type zinc-finger fold. Residues 257–338 (RAAIICEGYM…EVRIVELNGG (82 aa)) enclose the Toprim domain. Mg(2+) is bound by residues E263, D307, and D309.

The protein belongs to the DnaG primase family. Monomer. Interacts with DnaB. The cofactor is Zn(2+). Requires Mg(2+) as cofactor.

The enzyme catalyses ssDNA + n NTP = ssDNA/pppN(pN)n-1 hybrid + (n-1) diphosphate.. RNA polymerase that catalyzes the synthesis of short RNA molecules used as primers for DNA polymerase during DNA replication. The polypeptide is DNA primase (Treponema pallidum (strain Nichols)).